The chain runs to 325 residues: Tetraacyldisaccharide 4'-kinase (325 aa).

An ATP-binding site is contributed by 55-62 (TAGGNGKT).

The protein belongs to the LpxK family.

It catalyses the reaction a lipid A disaccharide + ATP = a lipid IVA + ADP + H(+). It functions in the pathway glycolipid biosynthesis; lipid IV(A) biosynthesis; lipid IV(A) from (3R)-3-hydroxytetradecanoyl-[acyl-carrier-protein] and UDP-N-acetyl-alpha-D-glucosamine: step 6/6. Its function is as follows. Transfers the gamma-phosphate of ATP to the 4'-position of a tetraacyldisaccharide 1-phosphate intermediate (termed DS-1-P) to form tetraacyldisaccharide 1,4'-bis-phosphate (lipid IVA). The sequence is that of Tetraacyldisaccharide 4'-kinase from Cronobacter sakazakii (strain ATCC BAA-894) (Enterobacter sakazakii).